The chain runs to 204 residues: Methylthioribulose-1-phosphate dehydratase (204 aa).

Zn(2+) contacts are provided by His-94 and His-96.

This sequence belongs to the aldolase class II family. MtnB subfamily. Zn(2+) serves as cofactor.

The catalysed reaction is 5-(methylsulfanyl)-D-ribulose 1-phosphate = 5-methylsulfanyl-2,3-dioxopentyl phosphate + H2O. Its pathway is amino-acid biosynthesis; L-methionine biosynthesis via salvage pathway; L-methionine from S-methyl-5-thio-alpha-D-ribose 1-phosphate: step 2/6. Functionally, catalyzes the dehydration of methylthioribulose-1-phosphate (MTRu-1-P) into 2,3-diketo-5-methylthiopentyl-1-phosphate (DK-MTP-1-P). The polypeptide is Methylthioribulose-1-phosphate dehydratase (Pseudomonas syringae pv. syringae (strain B728a)).